A 745-amino-acid chain; its full sequence is Polyribonucleotide nucleotidyltransferase (745 aa).

2 residues coordinate Mg(2+): D487 and D493. Positions 554–613 (PRIETMQIPTDKIRDVIGTGGKIIREIVEKTGAKINIEDTGIVKIASSDGKAIKAAYNWI) constitute a KH domain. The 69-residue stretch at 623 to 691 (GTIYDGTIVK…ERGKIRLSMK (69 aa)) folds into the S1 motif domain. The disordered stretch occupies residues 695 to 745 (QETGEDLTEKLKAERAERGEPEREERSDRGDRGDRGPRRDRGERRRESSGE). The span at 701 to 745 (LTEKLKAERAERGEPEREERSDRGDRGDRGPRRDRGERRRESSGE) shows a compositional bias: basic and acidic residues.

The protein belongs to the polyribonucleotide nucleotidyltransferase family. Mg(2+) is required as a cofactor.

The protein localises to the cytoplasm. The catalysed reaction is RNA(n+1) + phosphate = RNA(n) + a ribonucleoside 5'-diphosphate. In terms of biological role, involved in mRNA degradation. Catalyzes the phosphorolysis of single-stranded polyribonucleotides processively in the 3'- to 5'-direction. This chain is Polyribonucleotide nucleotidyltransferase, found in Methylorubrum extorquens (strain CM4 / NCIMB 13688) (Methylobacterium extorquens).